The following is a 329-amino-acid chain: Flotillin-like protein FloA (329 aa).

2 consecutive transmembrane segments (helical) span residues 6–26 (FIVI…FVPI) and 27–47 (GLWI…LVGM).

It belongs to the flotillin-like FloA family. Homooligomerizes.

Its subcellular location is the cell membrane. It localises to the membrane raft. Its function is as follows. Found in functional membrane microdomains (FMM) that may be equivalent to eukaryotic membrane rafts. FMMs are highly dynamic and increase in number as cells age. Flotillins are thought to be important factors in membrane fluidity. This chain is Flotillin-like protein FloA, found in Staphylococcus aureus (strain USA300).